The primary structure comprises 76 residues: Small ribosomal subunit protein bS18 (76 aa).

The protein belongs to the bacterial ribosomal protein bS18 family. As to quaternary structure, part of the 30S ribosomal subunit. Forms a tight heterodimer with protein bS6.

Binds as a heterodimer with protein bS6 to the central domain of the 16S rRNA, where it helps stabilize the platform of the 30S subunit. In Pelotomaculum thermopropionicum (strain DSM 13744 / JCM 10971 / SI), this protein is Small ribosomal subunit protein bS18.